A 164-amino-acid polypeptide reads, in one-letter code: Phosphopantetheine adenylyltransferase (164 aa).

Thr10 contributes to the substrate binding site. ATP-binding positions include 10 to 11 (TF) and His18. The substrate site is built by Lys42, Leu74, and Arg88. Residues 89–91 (GIR), Glu99, and 124–130 (YAFVSST) each bind ATP.

Belongs to the bacterial CoaD family. As to quaternary structure, homohexamer. Mg(2+) is required as a cofactor.

It localises to the cytoplasm. It carries out the reaction (R)-4'-phosphopantetheine + ATP + H(+) = 3'-dephospho-CoA + diphosphate. It functions in the pathway cofactor biosynthesis; coenzyme A biosynthesis; CoA from (R)-pantothenate: step 4/5. In terms of biological role, reversibly transfers an adenylyl group from ATP to 4'-phosphopantetheine, yielding dephospho-CoA (dPCoA) and pyrophosphate. The chain is Phosphopantetheine adenylyltransferase from Tolumonas auensis (strain DSM 9187 / NBRC 110442 / TA 4).